The primary structure comprises 102 residues: Hemoglobin subunit beta-Z (102 aa).

Positions 1 to 102 constitute a Globin domain; it reads FGNLSSAQAI…VANALSHKYH (102 aa). Heme b contacts are provided by His-19 and His-48.

Belongs to the globin family. As to quaternary structure, heterotetramer of two alpha chains and two beta chains.

Its function is as follows. This is an embryonic beta chain. This is Hemoglobin subunit beta-Z (HBBZ) from Mesocricetus auratus (Golden hamster).